A 143-amino-acid chain; its full sequence is MVELKVVVSDPKTGRAYNVDASTGAAGAVVGKKIGDEVDAGPLGLAGYKILITGGSDQTGTPARKSLPGAGRRKLLLAEGVGFHPVMEGERKRKMIRAHQITPEFVQVNARVTAYGEKTLDELFPKVEGAEKKEKTKERKVRK.

Belongs to the eukaryotic ribosomal protein eS6 family.

The chain is Small ribosomal subunit protein eS6 from Methanoregula boonei (strain DSM 21154 / JCM 14090 / 6A8).